The sequence spans 464 residues: Non-neuronal cytoplasmic intermediate filament protein (464 aa).

Positions 1–14 are enriched in polar residues; it reads MSTQTKKVTRTIIT. The interval 1-59 is disordered; sequence MSTQTKKVTRTIITSSSGGGGGGGGGRASYSSSGRFSGGGGRMRAGGVTSRRSVGSSYS. Residues 1 to 101 are head; sequence MSTQTKKVTR…RMTRAHEKQE (101 aa). A compositionally biased stretch (gly residues) spans 17–27; the sequence is SGGGGGGGGGR. A compositionally biased stretch (low complexity) spans 45–59; it reads AGGVTSRRSVGSSYS. In terms of domain architecture, IF rod spans 98-413; the sequence is EKQELSHLND…KLLEGEEIRL (316 aa). The segment at 102–133 is coil 1A; sequence LSHLNDRFASYIDKVRYLQERNSKLEAQIKIQ. The interval 134 to 144 is linker 1; the sequence is ESREAPNIKDL. The interval 145–237 is coil 1B; the sequence is YEKELRDLRA…FLKRVHDEEI (93 aa). A linker 2 region spans residues 238–264; the sequence is RQLQDQLNESLTIVEVDSRAASTFAPG. The interval 265–413 is coil 2; that stretch reads PDLTEALREI…KLLEGEEIRL (149 aa). The tract at residues 414 to 464 is tail; sequence FGESKEGVQQTSSSSSSSYQYSMKSGSGGGGGGSSSGKQQVTVSVSSGEEK. A disordered region spans residues 415-464; the sequence is GESKEGVQQTSSSSSSSYQYSMKSGSGGGGGGSSSGKQQVTVSVSSGEEK. A compositionally biased stretch (low complexity) spans 420–438; it reads GVQQTSSSSSSSYQYSMKS. The span at 439-448 shows a compositional bias: gly residues; it reads GSGGGGGGSS. Over residues 449 to 464 the composition is skewed to low complexity; it reads SGKQQVTVSVSSGEEK.

It belongs to the intermediate filament family. Can form homopolymers.

The protein localises to the cytoplasm. This is Non-neuronal cytoplasmic intermediate filament protein from Branchiostoma lanceolatum (Common lancelet).